A 362-amino-acid polypeptide reads, in one-letter code: Histidinol-phosphate aminotransferase (362 aa).

Lys-222 carries the post-translational modification N6-(pyridoxal phosphate)lysine.

Belongs to the class-II pyridoxal-phosphate-dependent aminotransferase family. Histidinol-phosphate aminotransferase subfamily. As to quaternary structure, homodimer. Requires pyridoxal 5'-phosphate as cofactor.

It carries out the reaction L-histidinol phosphate + 2-oxoglutarate = 3-(imidazol-4-yl)-2-oxopropyl phosphate + L-glutamate. It functions in the pathway amino-acid biosynthesis; L-histidine biosynthesis; L-histidine from 5-phospho-alpha-D-ribose 1-diphosphate: step 7/9. The chain is Histidinol-phosphate aminotransferase from Shewanella amazonensis (strain ATCC BAA-1098 / SB2B).